Here is a 322-residue protein sequence, read N- to C-terminus: Beta-ketoacyl-[acyl-carrier-protein] synthase III (322 aa).

Residues C113 and H247 contribute to the active site. The interval 248–252 is ACP-binding; sequence QANIR. The active site involves N278.

The protein belongs to the thiolase-like superfamily. FabH family. In terms of assembly, homodimer.

The protein resides in the cytoplasm. The enzyme catalyses malonyl-[ACP] + acetyl-CoA + H(+) = 3-oxobutanoyl-[ACP] + CO2 + CoA. The protein operates within lipid metabolism; fatty acid biosynthesis. Its function is as follows. Catalyzes the condensation reaction of fatty acid synthesis by the addition to an acyl acceptor of two carbons from malonyl-ACP. Catalyzes the first condensation reaction which initiates fatty acid synthesis and may therefore play a role in governing the total rate of fatty acid production. Possesses both acetoacetyl-ACP synthase and acetyl transacylase activities. Its substrate specificity determines the biosynthesis of branched-chain and/or straight-chain of fatty acids. The chain is Beta-ketoacyl-[acyl-carrier-protein] synthase III from Tropheryma whipplei (strain TW08/27) (Whipple's bacillus).